We begin with the raw amino-acid sequence, 290 residues long: Lectin-related protein (290 aa).

The N-terminal stretch at 1 to 36 (ANSNSRPHLLQTQKPFSVVLAISITFYLLLLNKVNS) is a signal peptide. Asparagine 119, asparagine 147, and asparagine 152 each carry an N-linked (GlcNAc...) asparagine glycan. Glutamate 161 and aspartate 163 together coordinate Mn(2+). The Ca(2+) site is built by aspartate 163, asparagine 167, and aspartate 170. Aspartate 170 and histidine 175 together coordinate Mn(2+).

It belongs to the leguminous lectin family. Homotetramer.

Its function is as follows. Does not have any carbohydrate binding or agglutination activity. The protein is Lectin-related protein of Cladrastis kentukea (Yellow wood).